The chain runs to 473 residues: Glutamate--tRNA ligase (473 aa).

Residues 11–21 (PSPTGFLHIGG) carry the 'HIGH' region motif. The short motif at 240–244 (KLSKR) is the 'KMSKS' region element. Lys-243 serves as a coordination point for ATP.

This sequence belongs to the class-I aminoacyl-tRNA synthetase family. Glutamate--tRNA ligase type 1 subfamily. As to quaternary structure, monomer.

The protein localises to the cytoplasm. It carries out the reaction tRNA(Glu) + L-glutamate + ATP = L-glutamyl-tRNA(Glu) + AMP + diphosphate. Functionally, catalyzes the attachment of glutamate to tRNA(Glu) in a two-step reaction: glutamate is first activated by ATP to form Glu-AMP and then transferred to the acceptor end of tRNA(Glu). The sequence is that of Glutamate--tRNA ligase from Rhodopseudomonas palustris (strain ATCC BAA-98 / CGA009).